A 1201-amino-acid chain; its full sequence is Autophagy-related protein 11 (1201 aa).

The segment at 90-109 is disordered; sequence FPFLGRPSTPTKGSDNSTGT. Positions 97–109 are enriched in polar residues; the sequence is STPTKGSDNSTGT. Positions 418 to 452 form a coiled coil; the sequence is LLRSDDMVRSLRDEKSKLEEKVKGSESRIRKLEDL. Disordered stretches follow at residues 458-503 and 525-545; these read HMGR…SEEK and KLQKDAHAERQSNTDKIQEVQ. Over residues 485–499 the composition is skewed to low complexity; that stretch reads RRSSVSSRRMSSNQS. The span at 525–542 shows a compositional bias: basic and acidic residues; it reads KLQKDAHAERQSNTDKIQ. 2 coiled-coil regions span residues 566–670 and 710–828; these read RRFL…ALQA and SAKA…WKER. Disordered regions lie at residues 1052–1076 and 1115–1201; these read SMNGANPDRRSIGEASDGTSFDDEN and DARG…LQGP. The segment covering 1133–1166 has biased composition (polar residues); the sequence is RTLSKSLDSRRNSSNSKKGPATPSQRGNDSTTDL. Basic and acidic residues predominate over residues 1191 to 1201; the sequence is EEVRRDQLQGP.

It belongs to the ATG11 family. In terms of assembly, homodimer and potential homooligomers.

It localises to the preautophagosomal structure membrane. Selective autophagy-specific protein required for pexophagy and mitophagy. In contrast to its Saccharomyces cerevisiae ATG11 ortholog, is not involved in non-selective autophagy nor in cytoplasm to vacuole transport (Cvt). The polypeptide is Autophagy-related protein 11 (Aspergillus oryzae (strain ATCC 42149 / RIB 40) (Yellow koji mold)).